Here is a 206-residue protein sequence, read N- to C-terminus: GTP cyclohydrolase 1 (206 aa).

Positions 95, 98, and 166 each coordinate Zn(2+).

The protein belongs to the GTP cyclohydrolase I family. As to quaternary structure, toroid-shaped homodecamer, composed of two pentamers of five dimers.

It carries out the reaction GTP + H2O = 7,8-dihydroneopterin 3'-triphosphate + formate + H(+). It participates in cofactor biosynthesis; 7,8-dihydroneopterin triphosphate biosynthesis; 7,8-dihydroneopterin triphosphate from GTP: step 1/1. In Bartonella quintana (strain Toulouse) (Rochalimaea quintana), this protein is GTP cyclohydrolase 1.